The following is a 361-amino-acid chain: Cobalt-precorrin-5B C(1)-methyltransferase (361 aa).

The protein belongs to the CbiD family.

The enzyme catalyses Co-precorrin-5B + S-adenosyl-L-methionine = Co-precorrin-6A + S-adenosyl-L-homocysteine. Its pathway is cofactor biosynthesis; adenosylcobalamin biosynthesis; cob(II)yrinate a,c-diamide from sirohydrochlorin (anaerobic route): step 6/10. In terms of biological role, catalyzes the methylation of C-1 in cobalt-precorrin-5B to form cobalt-precorrin-6A. The polypeptide is Cobalt-precorrin-5B C(1)-methyltransferase (Methylorubrum extorquens (strain CM4 / NCIMB 13688) (Methylobacterium extorquens)).